Reading from the N-terminus, the 322-residue chain is tRNA dimethylallyltransferase (322 aa).

18–25 (GPTASGKS) is a binding site for ATP. 20-25 (TASGKS) is a binding site for substrate. Interaction with substrate tRNA regions lie at residues 43-46 (DSRQ) and 167-171 (QRLVR).

It belongs to the IPP transferase family. Monomer. The cofactor is Mg(2+).

It carries out the reaction adenosine(37) in tRNA + dimethylallyl diphosphate = N(6)-dimethylallyladenosine(37) in tRNA + diphosphate. Catalyzes the transfer of a dimethylallyl group onto the adenine at position 37 in tRNAs that read codons beginning with uridine, leading to the formation of N6-(dimethylallyl)adenosine (i(6)A). This chain is tRNA dimethylallyltransferase, found in Chlorobium phaeobacteroides (strain BS1).